We begin with the raw amino-acid sequence, 340 residues long: Erythroferrone (340 aa).

The first 24 residues, 1-24, serve as a signal peptide directing secretion; that stretch reads MASTRRPVGARTLLACASLLAAMG. Disordered regions lie at residues 30-63, 79-112, and 141-161; these read SAEPVGTHARPQPPGAELPAPPANSPPEPTIAHA, SDKGINSKRRSKARRLKLGLPGPPGPPGPQGPPG, and HCTRDLTTPASGSPSRVPAAQ. The span at 40-58 shows a compositional bias: pro residues; it reads PQPPGAELPAPPANSPPEP. The span at 84-95 shows a compositional bias: basic residues; the sequence is NSKRRSKARRLK. A hydroxyproline mark is found at P99, P101, P102, P104, P105, and P107. The segment covering 99-112 has biased composition (pro residues); the sequence is PGPPGPPGPQGPPG. A compositionally biased stretch (polar residues) spans 145 to 154; sequence DLTTPASGSP. Residues 185–340 enclose the C1q domain; that stretch reads APRVEAAFHC…SHFSAILLGL (156 aa). 4 N-linked (GlcNAc...) asparagine glycosylation sites follow: N229, N281, N292, and N319.

Belongs to the adipolin/erythroferrone family. In terms of assembly, homodimer; disulfide-linked. Forms trimer, hexamers and higher molecular weight oligomers. May form heteromeric complexes with C1QTNF2 and C1QTNF12 and, to a lesser extent, with C1QTNF5 and C1QTNF10. Interacts with BMP5 and BMP7; the interaction inhibits BMP-induced transcription of HAMP. Interacts with BMP6; the interaction inhibits BMP-induced transcription of HAMP. Interacts with BMP2. Interacts with heterodimers composed of BMP2 and BMP6 in vitro, the interaction inhibits the heterodimer binding to its receptor BMPR1A /ALK3 and thereby suppresses expression of HAMP. Post-translationally, N-glycosylated; required for secretion of the mature protein. In terms of tissue distribution, expressed in the soleus muscle in the leg (at protein level). Found in blood (at protein level). Weakly expressed in the heart (at protein level). Predominantly expressed in skeletal muscle and, at much lower levels, in other tissues, including lung, eye, smooth muscle, brain and kidney. Within skeletal muscles, higher expression levels in soleus as compared with plantaris. Expressed in osteoblasts, mature osteoclasts and erythroblasts. When fasting, females tend to have higher circulating levels than males. Obese mice tend to have lower expression and circulating levels as compared to lean animals. Following EPO treatment, only expressed in bone marrow and spleen.

The protein resides in the secreted. Its function is as follows. Iron-regulatory hormone that acts as an erythroid regulator after hemorrhage: produced by erythroblasts following blood loss and mediates suppression of hepcidin (HAMP) expression in the liver, thereby promoting increased iron absorption and mobilization from stores. Promotes lipid uptake into adipocytes and hepatocytes via transcriptional up-regulation of genes involved in fatty acid uptake. Inhibits apoptosis and inflammatory response in cardiomyocytes via promotion of sphingosine-1-phosphate (S1P) and cAMP-dependent activation of AKT signaling. Inhibits autophagy induced by nutrient deficiency in hepatocytes via promoting the phosphorylation of IRS1, AKT, and MTOR, and thereby subsequent activation of the AKT-MTOR signaling pathway. Negatively regulates the differentiation of osteoblasts, potentially via sequestering BMP2, and thereby inhibits the activation of SMAD signaling. The reduction in BMP2 signaling in osteoblasts also results in an increase in expression of the osteoclastogenesis-promoting factors TNFSF11/RANKL and SOST, thereby indirectly promotes bone resorption. The polypeptide is Erythroferrone (Mus musculus (Mouse)).